The following is a 236-amino-acid chain: uncharacterized protein (236 aa).

A compositionally biased stretch (polar residues) spans 1–17 (MSVSSLLQPNTYNINSK). The tract at residues 1-94 (MSVSSLLQPN…GVKGTTGGTI (94 aa)) is disordered. Residues 18 to 35 (SQSLSNTPSNPTSQTNTL) show a composition bias toward low complexity. The region spanning 58–91 (GPSGPKGDKGDPGSKGETGSQGIKGDPGVKGTTG) is the Collagen-like domain.

Belongs to the sputnik virus V6 family.

This is an uncharacterized protein from Sputnik virophage.